Reading from the N-terminus, the 728-residue chain is Catalase-peroxidase (728 aa).

A disordered region spans residues 1 to 26 (MDNPTDTAGKCPVAHGNKPRGPSNRD). The segment at residues 96–218 (WHSAGTYRIT…LGAVQMGLIY (123 aa)) is a cross-link (tryptophyl-tyrosyl-methioninium (Trp-Tyr) (with M-244)). Histidine 97 (proton acceptor) is an active-site residue. The tryptophyl-tyrosyl-methioninium (Tyr-Met) (with W-96) cross-link spans 218 to 244 (YVNPEGPGGNPDPLASARDIRETFARM). Histidine 259 is a heme b binding site.

Belongs to the peroxidase family. Peroxidase/catalase subfamily. Homodimer or homotetramer. The cofactor is heme b. Formation of the three residue Trp-Tyr-Met cross-link is important for the catalase, but not the peroxidase activity of the enzyme.

It catalyses the reaction H2O2 + AH2 = A + 2 H2O. The catalysed reaction is 2 H2O2 = O2 + 2 H2O. Bifunctional enzyme with both catalase and broad-spectrum peroxidase activity. The chain is Catalase-peroxidase from Rhizobium etli (strain CIAT 652).